Here is a 626-residue protein sequence, read N- to C-terminus: tRNA uridine 5-carboxymethylaminomethyl modification enzyme MnmG (626 aa).

Residue 13-18 (GGGHAG) coordinates FAD. 273 to 287 (GPRYCPSIEDKIHRF) contacts NAD(+).

The protein belongs to the MnmG family. As to quaternary structure, homodimer. Heterotetramer of two MnmE and two MnmG subunits. FAD is required as a cofactor.

The protein resides in the cytoplasm. Functionally, NAD-binding protein involved in the addition of a carboxymethylaminomethyl (cmnm) group at the wobble position (U34) of certain tRNAs, forming tRNA-cmnm(5)s(2)U34. This is tRNA uridine 5-carboxymethylaminomethyl modification enzyme MnmG from Acinetobacter baumannii (strain AB307-0294).